The following is a 323-amino-acid chain: uncharacterized protein (323 aa).

The protein localises to the mitochondrion. This is an uncharacterized protein from Schizosaccharomyces pombe (strain 972 / ATCC 24843) (Fission yeast).